Here is a 110-residue protein sequence, read N- to C-terminus: Coiled-coil-helix-coiled-coil-helix domain-containing protein 5 (110 aa).

The residue at position 1 (Met1) is an N-acetylmethionine. CHCH domains follow at residues 9-52 (ARYC…PIIR) and 55-97 (RQAC…QPPS). 4 short sequence motifs (cx9C motif) span residues 12–22 (CSRELDQYGQC), 34–44 (CHHLKMSIARC), 58–68 (CAEPFEAFEKC), and 79–89 (CAEHMRRFLQC). Disulfide bonds link Cys12-Cys44, Cys22-Cys34, Cys58-Cys89, and Cys68-Cys79.

As to quaternary structure, monomer.

The protein localises to the mitochondrion intermembrane space. The sequence is that of Coiled-coil-helix-coiled-coil-helix domain-containing protein 5 (Chchd5) from Mus musculus (Mouse).